Consider the following 369-residue polypeptide: WAT1-related protein At3g53210 (369 aa).

The next 10 helical transmembrane spans lie at 12-31 (IAMV…MRYA), 39-59 (LVFP…SAYF), 72-92 (FLIQ…GFYI), 103-123 (ASAT…LLGI), 133-153 (GIAK…ITLY), 182-202 (WTLG…WIVL), 214-234 (FSFV…ISAY), 252-272 (ALLY…IYVV), 278-298 (LFVS…ATLA), and 303-323 (FYLG…LVVM). 2 consecutive EamA domains span residues 24-150 (NHVI…SLVI) and 194-323 (LCWS…LVVM). Residues 348 to 369 (GDEEDYHNNKPRSPISQPLISS) form a disordered region.

The protein belongs to the drug/metabolite transporter (DMT) superfamily. Plant drug/metabolite exporter (P-DME) (TC 2.A.7.4) family.

The protein resides in the membrane. This chain is WAT1-related protein At3g53210, found in Arabidopsis thaliana (Mouse-ear cress).